The primary structure comprises 422 residues: Protein krasavietz (422 aa).

Positions 1–26 are disordered; the sequence is MSQKTERPVLSGQRIKTRKRDEREKY. The W2 domain occupies 244-415; sequence KLHKAQASQE…QSAEEESESE (172 aa). Residues Ser407, Ser412, and Ser414 each carry the phosphoserine modification.

The protein belongs to the BZW family. Expressed in mushroom bodies.

May be involved in memory formation. The polypeptide is Protein krasavietz (kra) (Drosophila melanogaster (Fruit fly)).